The following is a 508-amino-acid chain: Probable metalloreductase AIM14 (508 aa).

8 consecutive transmembrane segments (helical) span residues 18-38, 70-90, 100-120, 137-157, 168-188, 198-218, 222-242, and 347-367; these read LPYGYYVLGVIVFYTIFLIVM, PLLLLLVFVPFIHKYSLVAYI, LSYVLVILNVLLTLRPANPIL, FVTVIGIIHGIGFIVKWSLDP, LFNFIGVIAFVPLFILMFASV, SFYVIHQLGQWAMVFLVPIHA, VTVPYFFILLALYIWRGISYI, and VAIVVGGSGISFGLSIFKYLQ. One can recognise a Ferric oxidoreductase domain in the interval 97 to 214; sequence LGRLSYVLVI…LGQWAMVFLV (118 aa). Residues 241–361 enclose the FAD-binding FR-type domain; it reads YIYYSTTVNV…GGSGISFGLS (121 aa).

It belongs to the ferric reductase (FRE) family. AIM14 subfamily.

The protein resides in the membrane. Functionally, probable cell surface metalloreductase. May be involved in iron or copper homeostasis. The polypeptide is Probable metalloreductase AIM14 (AIM14) (Kluyveromyces lactis (strain ATCC 8585 / CBS 2359 / DSM 70799 / NBRC 1267 / NRRL Y-1140 / WM37) (Yeast)).